Reading from the N-terminus, the 466-residue chain is F-box/WD repeat-containing protein 15 (466 aa).

An F-box domain is found at 1–45; it reads MAIHLPCLPMMKILSYLDAYSLLQAAQVNKDWNELASSDVLWRKL. WD repeat units lie at residues 101 to 143, 146 to 185, 187 to 228, 339 to 379, and 381 to 419; these read GYAC…ITWK, EQPA…ALAT, NLKS…LIST, LQCH…KTFQ, and CPEM…LRKC.

In terms of assembly, part of an SCF (SKP1-CUL1-F-box protein) E3 ubiquitin-protein ligase complex. Interacts with KAT7 and SKP1. As to expression, specifically expressed in oocytes from follicles of the medullary region of the ovary.

The protein resides in the cytoplasm. Its subcellular location is the cytosol. It is found in the endoplasmic reticulum. It localises to the nucleus. It functions in the pathway protein modification; protein ubiquitination. In terms of biological role, substrate-recognition component of an SCF (SKP1-CUL1-F-box protein)-type E3 ubiquitin ligase complex. Promotes KAT7 ubiquitination and subsequent degradation in collaboration with MAP2K1 kinase, leading to reduced histone H3K14 acetylation and increased cell proliferation. This chain is F-box/WD repeat-containing protein 15, found in Mus musculus (Mouse).